Consider the following 123-residue polypeptide: CD59A glycoprotein (123 aa).

Positions 1–23 are cleaved as a signal peptide; it reads MRAQRGLILLLLLLAVFCSTAVS. Residues 24 to 96 form the UPAR/Ly6 domain; it reads LTCYHCFQPV…CCQFNLCNKS (73 aa). 5 disulfide bridges follow: cysteine 26–cysteine 50, cysteine 29–cysteine 37, cysteine 43–cysteine 63, cysteine 69–cysteine 87, and cysteine 88–cysteine 93. Asparagine 40 is a glycosylation site (N-linked (GlcNAc...) asparagine). Asparagine 94 is a glycosylation site (N-linked (GlcNAc...) asparagine). Residues 97-123 constitute a propeptide, removed in mature form; the sequence is DGSLGKTPLLGTSVLVAILNLCFLSHL.

Interacts with T-cell surface antigen CD2. Post-translationally, N- and O-glycosylated. Expressed in all tissues examined (liver, kidney, spleen, thymus, brain and heart). Low levels in thymus. Also expressed in mononuclear cells, erythrocytes and platelets. Barely detected in neutrophils.

It localises to the cell membrane. The protein localises to the secreted. Potent inhibitor of the complement membrane attack complex (MAC) action, which protects self-cells from damage during complement activation. Acts by binding to the beta-haipins of C8 (C8A and C8B) components of the assembling MAC, forming an intermolecular beta-sheet that prevents incorporation of the multiple copies of C9 required for complete formation of the osmolytic pore. This Mus musculus (Mouse) protein is CD59A glycoprotein.